We begin with the raw amino-acid sequence, 98 residues long: U1-theraphotoxin-Ap1a (98 aa).

The first 23 residues, 1–23 (MRSLTLAAVLACSLLLVFHTSAA), serve as a signal peptide directing secretion. The propeptide occupies 24-50 (EELEVQDGHLMNPGDGDTALATVDDER). Cystine bridges form between cysteine 54–cysteine 84, cysteine 58–cysteine 90, and cysteine 72–cysteine 95. Residues 63–84 (DGKSKEGKPCKPKGDKNKDKKC) are disordered.

Belongs to the neurotoxin 12 (Hwtx-2) family. 01 (Ap1a) subfamily. In terms of tissue distribution, expressed by the venom gland.

It localises to the secreted. Its function is as follows. Is toxic to both insects and mammals. Induces reversible paralysis when injected into S.frugiperda larvae. Reduces both the amplitude and frequency of responses from muscle (GF-TTM and GF-DLM) pathways in the D.melanogaster giant fiber circuit, suggesting an action at the neuromuscular junction, which is mediated by glutamatergic receptors. In mice, intracranial injection of 30 ug causes increased urination, myoclonus, hypermotility with circular movements followed by respiratory and generalized seizures resulting in death within 25-35 minutes of injection. In Acanthoscurria paulensis (Brazilian giant black tarantula spider), this protein is U1-theraphotoxin-Ap1a.